We begin with the raw amino-acid sequence, 416 residues long: Enterobactin exporter EntS (416 aa).

Over 1–21 (MNKQSWLLNLSLLKTHPAFRA) the chain is Cytoplasmic. Residues 22 to 42 (VFLARFISIVSLGLLGVAVPV) form a helical membrane-spanning segment. Over 43 to 55 (QIQMMTHSTWQVG) the chain is Periplasmic. A helical transmembrane segment spans residues 56-76 (LSVTLTGGAMFVGLMVGGVLA). Topologically, residues 77-83 (DRYERKK) are cytoplasmic. Residues 84 to 104 (VILLARGTCGIGFIGLCLNAL) traverse the membrane as a helical segment. Over 105-109 (LPEPS) the chain is Periplasmic. Residues 110 to 130 (LLAIYLLGLWDGFFASLGVTA) form a helical membrane-spanning segment. Over 131–156 (LLAATPALVGRENLMQAGAITMLTVR) the chain is Cytoplasmic. A helical transmembrane segment spans residues 157–177 (LGSVISPMIGGLLLATGGVAW). Position 178 (Asn-178) is a topological domain, periplasmic. A helical membrane pass occupies residues 179-199 (YGLAAAGTFITLLPLLSLPAL). Over 200–218 (PPPPQPREHPLKSLLAGFR) the chain is Cytoplasmic. The chain crosses the membrane as a helical span at residues 219–239 (FLLASPLVGGIALLGGLLTMA). Residues 240–256 (SAVRVLYPALADNWQMS) lie on the Periplasmic side of the membrane. The helical transmembrane segment at 257–277 (AAQIGFLYAAIPLGAAIGALT) threads the bilayer. The Cytoplasmic segment spans residues 278–287 (SGKLAHSARP). Residues 288–307 (GLLMLLSTLGSFLAIGLFGL) traverse the membrane as a helical segment. The Periplasmic segment spans residues 308–313 (MPMWIL). Residues 314-336 (GVVCLALFGWLSAVSSLLQYTML) traverse the membrane as a helical segment. At 337-356 (QTQTPEAMLGRINGLWTAQN) the chain is on the cytoplasmic side. The chain crosses the membrane as a helical span at residues 357–377 (VTGDAIGAALLGGLGAMMTPV). A topological domain (periplasmic) is located at residue Ala-378. A helical membrane pass occupies residues 379 to 399 (SASASGFGLLIIGVLLLLVLV). Residues 400 to 416 (ELRHFRQTPPQVTASDS) lie on the Cytoplasmic side of the membrane.

This sequence belongs to the major facilitator superfamily. EntS (TC 2.A.1.38) family.

The protein resides in the cell inner membrane. Component of an export pathway for enterobactin. The sequence is that of Enterobactin exporter EntS from Escherichia coli (strain K12 / MC4100 / BW2952).